We begin with the raw amino-acid sequence, 332 residues long: L-lactate dehydrogenase A chain (332 aa).

An N-acetylalanine modification is found at Ala2. Lys5 carries the post-translational modification N6-acetyllysine; alternate. Lys5 is subject to N6-succinyllysine; alternate. Tyr10 carries the phosphotyrosine modification. Lys14 is subject to N6-acetyllysine. The residue at position 18 (Thr18) is a Phosphothreonine. Gly29–Lys57 contributes to the NAD(+) binding site. An N6-acetyllysine; alternate modification is found at Lys57. Lys57 participates in a covalent cross-link: Glycyl lysine isopeptide (Lys-Gly) (interchain with G-Cter in SUMO2); alternate. Lys81 is modified (N6-acetyllysine). Arg99 contacts NAD(+). Arg106 is a substrate binding site. The residue at position 118 (Lys118) is an N6-acetyllysine; alternate. Residue Lys118 is modified to N6-succinyllysine; alternate. Lys126 carries the N6-acetyllysine modification. Position 138 (Asn138) interacts with NAD(+). The substrate site is built by Asn138 and Arg169. Residue His193 is the Proton acceptor of the active site. N6-acetyllysine occurs at positions 224 and 232. Position 239 is a phosphotyrosine (Tyr239). Lys243 carries the N6-acetyllysine modification. Residue Thr248 participates in substrate binding. Thr309 bears the Phosphothreonine mark. At Ser310 the chain carries Phosphoserine. N6-acetyllysine; alternate is present on Lys318. Lys318 bears the N6-succinyllysine; alternate mark. Thr322 is subject to Phosphothreonine.

The protein belongs to the LDH/MDH superfamily. LDH family. As to quaternary structure, homotetramer. Interacts with PTEN upstream reading frame protein MP31. Interacts with folliculin FLCN; the interaction is direct and inhibits enzymatic activity. In terms of processing, ISGylated. As to expression, predominantly expressed in anaerobic tissues such as skeletal muscle and liver.

The protein resides in the cytoplasm. The enzyme catalyses (S)-lactate + NAD(+) = pyruvate + NADH + H(+). It participates in fermentation; pyruvate fermentation to lactate; (S)-lactate from pyruvate: step 1/1. With respect to regulation, fermentation of pyruvate to lactate is inhibited when bound to folliculin FLCN, perhaps partly by FLCN preventing binding of cofactor NADH. In terms of biological role, interconverts simultaneously and stereospecifically pyruvate and lactate with concomitant interconversion of NADH and NAD(+). The sequence is that of L-lactate dehydrogenase A chain from Homo sapiens (Human).